A 594-amino-acid polypeptide reads, in one-letter code: UvrABC system protein C (594 aa).

A GIY-YIG domain is found at D14 to I91. A UVR domain is found at K196–I231.

Belongs to the UvrC family. Interacts with UvrB in an incision complex.

Its subcellular location is the cytoplasm. Functionally, the UvrABC repair system catalyzes the recognition and processing of DNA lesions. UvrC both incises the 5' and 3' sides of the lesion. The N-terminal half is responsible for the 3' incision and the C-terminal half is responsible for the 5' incision. In Bacillus cereus (strain B4264), this protein is UvrABC system protein C.